The chain runs to 282 residues: Aquaporin PIP-type (282 aa).

The next 2 membrane-spanning stretches (helical) occupy residues 39–61 (WRAA…ATVI) and 74–96 (GLLG…TAGI). The NPA 1 motif lies at 102-104 (NPA). 4 helical membrane-spanning segments follow: residues 116-138 (SLLR…VGLV), 159-181 (GYNK…YTVF), 201-223 (LPIG…TGIN), and 243-265 (HWIF…QYVL). The NPA 2 motif lies at 223-225 (NPA).

Belongs to the MIP/aquaporin (TC 1.A.8) family. PIP (TC 1.A.8.11) subfamily.

Its subcellular location is the membrane. Its function is as follows. Water-specific channel. This chain is Aquaporin PIP-type, found in Atriplex canescens (Fourwing saltbush).